A 1412-amino-acid polypeptide reads, in one-letter code: Probable phosphatidylinositol 4-kinase STT4 homolog (1412 aa).

A PIK helical domain is found at 878–1055; the sequence is SMETNGFYRF…GTFVRCIEEI (178 aa). Residues 1056–1163 form a pleckstrin homology (PH) domain conferring phosphoinositide binding specificity region; that stretch reads MKEMPDGSRD…ISIKQLIFKS (108 aa). Positions 1127 to 1396 constitute a PI3K/PI4K catalytic domain; that stretch reads NGSARALQSH…LIAESSQKFR (270 aa). Positions 1133–1139 are G-loop; that stretch reads LQSHSKV. The tract at residues 1266 to 1274 is catalytic loop; it reads NIKDRHNGN. The interval 1285–1308 is activation loop; that stretch reads HIDFGYMLEMSPGNLNIEAPLKLT.

Belongs to the PI3/PI4-kinase family. Type III PI4K subfamily.

Its subcellular location is the cytoplasm. It catalyses the reaction a 1,2-diacyl-sn-glycero-3-phospho-(1D-myo-inositol) + ATP = a 1,2-diacyl-sn-glycero-3-phospho-(1D-myo-inositol 4-phosphate) + ADP + H(+). Its function is as follows. Acts on phosphatidylinositol (PI) in the first committed step in the production of the second messenger inositol 1,4,5,-trisphosphate. The sequence is that of Probable phosphatidylinositol 4-kinase STT4 homolog (STT4) from Encephalitozoon cuniculi (strain GB-M1) (Microsporidian parasite).